An 89-amino-acid polypeptide reads, in one-letter code: Small ribosomal subunit protein uS19 (89 aa).

It belongs to the universal ribosomal protein uS19 family.

Its function is as follows. Protein S19 forms a complex with S13 that binds strongly to the 16S ribosomal RNA. This is Small ribosomal subunit protein uS19 from Xanthomonas axonopodis pv. citri (strain 306).